Consider the following 142-residue polypeptide: Small ribosomal subunit protein uS12 (142 aa).

The protein belongs to the universal ribosomal protein uS12 family. Part of the 30S ribosomal subunit.

Its function is as follows. With S4 and S5 plays an important role in translational accuracy. Located at the interface of the 30S and 50S subunits. The protein is Small ribosomal subunit protein uS12 of Methanosarcina barkeri (strain Fusaro / DSM 804).